The primary structure comprises 485 residues: Glutamyl-tRNA(Gln) amidotransferase subunit A (485 aa).

Catalysis depends on charge relay system residues Lys79 and Ser154. Ser178 acts as the Acyl-ester intermediate in catalysis.

Belongs to the amidase family. GatA subfamily. As to quaternary structure, heterotrimer of A, B and C subunits.

The enzyme catalyses L-glutamyl-tRNA(Gln) + L-glutamine + ATP + H2O = L-glutaminyl-tRNA(Gln) + L-glutamate + ADP + phosphate + H(+). Functionally, allows the formation of correctly charged Gln-tRNA(Gln) through the transamidation of misacylated Glu-tRNA(Gln) in organisms which lack glutaminyl-tRNA synthetase. The reaction takes place in the presence of glutamine and ATP through an activated gamma-phospho-Glu-tRNA(Gln). In Persephonella marina (strain DSM 14350 / EX-H1), this protein is Glutamyl-tRNA(Gln) amidotransferase subunit A.